Here is a 191-residue protein sequence, read N- to C-terminus: Threonylcarbamoyl-AMP synthase (191 aa).

The 182-residue stretch at Val10 to Ala191 folds into the YrdC-like domain.

The protein belongs to the SUA5 family. TsaC subfamily.

The protein localises to the cytoplasm. It catalyses the reaction L-threonine + hydrogencarbonate + ATP = L-threonylcarbamoyladenylate + diphosphate + H2O. In terms of biological role, required for the formation of a threonylcarbamoyl group on adenosine at position 37 (t(6)A37) in tRNAs that read codons beginning with adenine. Catalyzes the conversion of L-threonine, HCO(3)(-)/CO(2) and ATP to give threonylcarbamoyl-AMP (TC-AMP) as the acyladenylate intermediate, with the release of diphosphate. This chain is Threonylcarbamoyl-AMP synthase, found in Saccharophagus degradans (strain 2-40 / ATCC 43961 / DSM 17024).